An 86-amino-acid polypeptide reads, in one-letter code: Small ribosomal subunit protein bS18 (86 aa).

Belongs to the bacterial ribosomal protein bS18 family. Part of the 30S ribosomal subunit. Forms a tight heterodimer with protein bS6.

Functionally, binds as a heterodimer with protein bS6 to the central domain of the 16S rRNA, where it helps stabilize the platform of the 30S subunit. This chain is Small ribosomal subunit protein bS18, found in Campylobacter concisus (strain 13826).